The chain runs to 974 residues: Kinase-interacting protein 1 (974 aa).

The region spanning 10–90 (YSWWAASHIR…ERYDHLSKEL (81 aa)) is the NAB domain. A disordered region spans residues 151 to 170 (STASKQKQGKQSSKIEDAAK). A coiled-coil region spans residues 173 to 423 (LSKNEAIEEI…DVVNQNSCLR (251 aa)). The disordered stretch occupies residues 586–614 (AQPTPAEKGDEKVSAQSGNTSVYETHTQK). Polar residues predominate over residues 599–610 (SAQSGNTSVYET). Positions 641–697 (NEYTAILKNYKEVTKKLSDIEKKDRDTEFELTLQTRELKSAIAKRDEEIHNLRQKLS) form a coiled coil. The interval 714-740 (LLDPSDPSSARGLKPEDLPQIKDGDDE) is disordered. Residues 726–736 (LKPEDLPQIKD) are compositionally biased toward basic and acidic residues. 2 coiled-coil regions span residues 784–807 (HQIQ…RDKE) and 882–905 (AAKF…ELEA).

As to quaternary structure, homodimer or homooligomer. Interacts with PRK1. Post-translationally, phosphorylated by PRK1. Expressed in mature pollen grains and pollen tubes, but not in style, ovary, petal, leaf, root or sepal.

It is found in the cytoplasm. Probably involved in the receptor-like kinase-mediated signal transduction pathway. This is Kinase-interacting protein 1 from Petunia integrifolia (Violet-flowered petunia).